Here is a 272-residue protein sequence, read N- to C-terminus: 3-methyl-2-oxobutanoate hydroxymethyltransferase (272 aa).

Residues aspartate 42 and aspartate 86 each coordinate Mg(2+). Residues aspartate 42–serine 43, aspartate 86, and lysine 116 each bind 3-methyl-2-oxobutanoate. Residue glutamate 118 coordinates Mg(2+). Catalysis depends on glutamate 185, which acts as the Proton acceptor.

Belongs to the PanB family. As to quaternary structure, homodecamer; pentamer of dimers. The cofactor is Mg(2+).

It localises to the cytoplasm. The enzyme catalyses 3-methyl-2-oxobutanoate + (6R)-5,10-methylene-5,6,7,8-tetrahydrofolate + H2O = 2-dehydropantoate + (6S)-5,6,7,8-tetrahydrofolate. The protein operates within cofactor biosynthesis; (R)-pantothenate biosynthesis; (R)-pantoate from 3-methyl-2-oxobutanoate: step 1/2. Catalyzes the reversible reaction in which hydroxymethyl group from 5,10-methylenetetrahydrofolate is transferred onto alpha-ketoisovalerate to form ketopantoate. The protein is 3-methyl-2-oxobutanoate hydroxymethyltransferase of Prochlorococcus marinus (strain MIT 9303).